Consider the following 209-residue polypeptide: Molybdenum cofactor guanylyltransferase (209 aa).

Residues 13-15 (LAG), Lys-26, Asn-54, Asp-74, and Asp-104 each bind GTP. Asp-104 is a binding site for Mg(2+).

The protein belongs to the MobA family. As to quaternary structure, monomer. Mg(2+) is required as a cofactor.

It localises to the cytoplasm. It carries out the reaction Mo-molybdopterin + GTP + H(+) = Mo-molybdopterin guanine dinucleotide + diphosphate. Transfers a GMP moiety from GTP to Mo-molybdopterin (Mo-MPT) cofactor (Moco or molybdenum cofactor) to form Mo-molybdopterin guanine dinucleotide (Mo-MGD) cofactor. The protein is Molybdenum cofactor guanylyltransferase of Acinetobacter baumannii (strain ATCC 17978 / DSM 105126 / CIP 53.77 / LMG 1025 / NCDC KC755 / 5377).